The sequence spans 250 residues: ATP synthase subunit a (250 aa).

6 helical membrane-spanning segments follow: residues 25–45 (VSFT…FFFL), 84–104 (VFFP…VIGL), 115–135 (IVVT…YGFY), 141–161 (FLHL…IVLI), 187–209 (ALKV…WLGA), and 223–243 (ELLV…IYLN).

Belongs to the ATPase A chain family. In terms of assembly, F-type ATPases have 2 components, CF(1) - the catalytic core - and CF(0) - the membrane proton channel. CF(1) has five subunits: alpha(3), beta(3), gamma(1), delta(1), epsilon(1). CF(0) has three main subunits: a(1), b(2) and c(9-12). The alpha and beta chains form an alternating ring which encloses part of the gamma chain. CF(1) is attached to CF(0) by a central stalk formed by the gamma and epsilon chains, while a peripheral stalk is formed by the delta and b chains.

It localises to the cell inner membrane. In terms of biological role, key component of the proton channel; it plays a direct role in the translocation of protons across the membrane. This is ATP synthase subunit a from Azorhizobium caulinodans (strain ATCC 43989 / DSM 5975 / JCM 20966 / LMG 6465 / NBRC 14845 / NCIMB 13405 / ORS 571).